Reading from the N-terminus, the 264-residue chain is Thymidylate synthase (264 aa).

R21 serves as a coordination point for dUMP. Position 51 (H51) interacts with (6R)-5,10-methylene-5,6,7,8-tetrahydrofolate. A dUMP-binding site is contributed by 126-127 (RR). C146 functions as the Nucleophile in the catalytic mechanism. Residues 166–169 (RSAD), N177, and 207–209 (HLY) contribute to the dUMP site. A (6R)-5,10-methylene-5,6,7,8-tetrahydrofolate-binding site is contributed by D169. A263 serves as a coordination point for (6R)-5,10-methylene-5,6,7,8-tetrahydrofolate.

Belongs to the thymidylate synthase family. Bacterial-type ThyA subfamily. Homodimer.

The protein resides in the cytoplasm. It carries out the reaction dUMP + (6R)-5,10-methylene-5,6,7,8-tetrahydrofolate = 7,8-dihydrofolate + dTMP. Its pathway is pyrimidine metabolism; dTTP biosynthesis. In terms of biological role, catalyzes the reductive methylation of 2'-deoxyuridine-5'-monophosphate (dUMP) to 2'-deoxythymidine-5'-monophosphate (dTMP) while utilizing 5,10-methylenetetrahydrofolate (mTHF) as the methyl donor and reductant in the reaction, yielding dihydrofolate (DHF) as a by-product. This enzymatic reaction provides an intracellular de novo source of dTMP, an essential precursor for DNA biosynthesis. This is Thymidylate synthase from Stutzerimonas stutzeri (strain A1501) (Pseudomonas stutzeri).